The sequence spans 161 residues: Bacterioferritin (161 aa).

Residues 1–145 (MKGDAKVIEF…TQISLYDRLG (145 aa)) enclose the Ferritin-like diiron domain. The Fe cation site is built by glutamate 18 and glutamate 51. A heme b-binding site is contributed by methionine 52. 4 residues coordinate Fe cation: histidine 54, glutamate 94, glutamate 127, and histidine 130.

Belongs to the bacterioferritin family. In terms of assembly, homooligomer of 24 subunits, arranged as 12 dimers, that are packed together to form an approximately spherical molecule with a central cavity, in which large amounts of iron can be deposited. Requires heme b as cofactor.

It catalyses the reaction 4 Fe(2+) + O2 + 4 H(+) = 4 Fe(3+) + 2 H2O. The catalysed reaction is Fe(2+)(in) = Fe(2+)(out). In terms of biological role, iron-storage protein, whose ferroxidase center binds Fe(2+), oxidizes it using dioxygen to Fe(3+), and participates in the subsequent Fe(3+) oxide mineral core formation within the central cavity of the BFR protein shell. This Rhodobacter capsulatus (Rhodopseudomonas capsulata) protein is Bacterioferritin (bfr).